The chain runs to 1388 residues: CRISPR-associated endonuclease Cas9 2 (1388 aa).

Aspartate 10 functions as the For RuvC-like nuclease domain in the catalytic mechanism. The Mg(2+) site is built by aspartate 10, glutamate 763, and glutamate 767. Residues 771–928 (TNQGKSNSQQ…DKAGFIQRQL (158 aa)) enclose the HNH Cas9-type domain. Residue histidine 847 is the Proton acceptor for HNH nuclease domain of the active site. Histidine 990 serves as a coordination point for Mg(2+). Positions 1100-1109 (EQNHGLDRGK) are enriched in basic and acidic residues. A disordered region spans residues 1100–1130 (EQNHGLDRGKPKGLFNANLSSKPKPNSNENL). Positions 1102–1388 (NHGLDRGKPK…RIDLAKLGEG (287 aa)) are PAM-interacting domain (PI). The segment covering 1116-1129 (ANLSSKPKPNSNEN) has biased composition (polar residues).

The protein belongs to the CRISPR-associated protein Cas9 family. Subtype II-A subfamily. As to quaternary structure, monomer. Binds crRNA and tracrRNA. Requires Mg(2+) as cofactor.

In terms of biological role, CRISPR (clustered regularly interspaced short palindromic repeat) is an adaptive immune system that provides protection against mobile genetic elements (viruses, transposable elements and conjugative plasmids). CRISPR clusters contain spacers, sequences complementary to antecedent mobile elements, and target invading nucleic acids. CRISPR clusters are transcribed and processed into CRISPR RNA (crRNA). In type II CRISPR systems correct processing of pre-crRNA requires a trans-encoded small RNA (tracrRNA), endogenous ribonuclease 3 (rnc) and this protein. The tracrRNA serves as a guide for ribonuclease 3-aided processing of pre-crRNA. Subsequently Cas9/crRNA/tracrRNA endonucleolytically cleaves linear or circular dsDNA target complementary to the spacer yielding blunt ends; Cas9 is inactive in the absence of the 2 guide RNAs (gRNA). Cas9 recognizes a 3'-G-rich protospacer adjacent motif (PAM, GGG in this organism) in the CRISPR repeat sequences to help distinguish self versus nonself, as targets within the bacterial CRISPR locus do not have PAMs. PAM recognition is also required for catalytic activity. Complements the gRNA coprocessing defect in a cas9 deletion in S.pyogenes strain 370, and cuts target DNA in Cas9:gRNAs mixing experiments with S.mutans strain UA159. The chain is CRISPR-associated endonuclease Cas9 2 from Streptococcus thermophilus (strain ATCC BAA-491 / LMD-9).